The sequence spans 415 residues: MEQLWLFENEDRISELHEALLVHIMSSLPTKTVVATSVLSKRWRHVWKTVQNLKFVSKYHQTFSEDVYRFFMLHKAPFLESLDLEFSNQLDASDLGILVGIAFARHVRNLVLDLDYYSNFSQLCAARFPSGLCIYDNNKTLETLTLKHSILLYFPYRVCLKSLRKLHLYKVHFYGKDSVYNLLCGCPSLRDLIVHRYRECMETFTIAVPSLERLTIEDSGFGYGCCYVINAPSLKYLNIRRFKYLNSCLIEKAPELAEAKVSDVSDIENENILESLTSAKRLSIHLSPLEWWNLLTFMLEASPKLQILKLTDLNMSSTKGNQIGQKWIQPKCVPECLLFHLETFVWTGYEWQRRDEKEVARYILRNTTSLKKATFSTKPIEPVKLKVFKKRREILNELASLGRASNPSDFVFESI.

Positions glutamate 10–lysine 58 constitute an F-box domain. LRR repeat units follow at residues histidine 60–phenylalanine 86, serine 87–leucine 114, threonine 143–lysine 170, valine 171–arginine 196, and arginine 213–arginine 241. In terms of domain architecture, FBD spans isoleucine 272–threonine 377.

The protein is Putative F-box/FBD/LRR-repeat protein At3g49040 of Arabidopsis thaliana (Mouse-ear cress).